The primary structure comprises 86 residues: Ferredoxin YfhL (86 aa).

2 4Fe-4S ferredoxin-type domains span residues 1 to 29 (MALLITKKCINCDMCEPECPNEAISMGDH) and 31 to 65 (YEINSDKCTECVGHYETPTCQKVCPIPNTIVKDPA). Cys-9, Cys-12, Cys-15, Cys-19, Cys-38, Cys-41, Cys-50, and Cys-54 together coordinate [4Fe-4S] cluster.

[4Fe-4S] cluster is required as a cofactor.

In terms of biological role, ferredoxins are iron-sulfur proteins that transfer electrons in a wide variety of metabolic reactions. This is Ferredoxin YfhL (yfhL) from Escherichia coli (strain K12).